A 521-amino-acid chain; its full sequence is AAA ATPase forming ring-shaped complexes (521 aa).

Residues 4-44 are a coiled coil; the sequence is TEDLAALNDRLMAKNHALAEALSRAGKELTKAKSQLAQLAQ. Position 235-240 (235-240) interacts with ATP; it reads GNGKTM.

The protein belongs to the AAA ATPase family. As to quaternary structure, homohexamer. Assembles into a hexameric ring structure.

This chain is AAA ATPase forming ring-shaped complexes, found in Bifidobacterium longum (strain DJO10A).